Reading from the N-terminus, the 602-residue chain is Translation factor GUF1 homolog, organellar chromatophore (602 aa).

The tr-type G domain occupies 7–189; the sequence is SRIRNFCIIA…AIVERIPPPV (183 aa). GTP-binding positions include 16-23, 82-86, and 136-139; these read AHIDHGKS, DTPGH, and NKID.

This sequence belongs to the TRAFAC class translation factor GTPase superfamily. Classic translation factor GTPase family. LepA subfamily.

It localises to the plastid. The protein localises to the organellar chromatophore. The enzyme catalyses GTP + H2O = GDP + phosphate + H(+). Its function is as follows. Promotes protein synthesis. May act as a fidelity factor of the translation reaction, by catalyzing a one-codon backward translocation of tRNAs on improperly translocated ribosomes. The polypeptide is Translation factor GUF1 homolog, organellar chromatophore (Paulinella chromatophora).